A 239-amino-acid chain; its full sequence is Pyridoxine 5'-phosphate synthase (239 aa).

3-amino-2-oxopropyl phosphate is bound at residue asparagine 7. 9 to 10 (DH) serves as a coordination point for 1-deoxy-D-xylulose 5-phosphate. Arginine 18 is a binding site for 3-amino-2-oxopropyl phosphate. Histidine 43 serves as the catalytic Proton acceptor. 1-deoxy-D-xylulose 5-phosphate contacts are provided by arginine 45 and histidine 50. Catalysis depends on glutamate 70, which acts as the Proton acceptor. A 1-deoxy-D-xylulose 5-phosphate-binding site is contributed by threonine 100. Residue histidine 191 is the Proton donor of the active site. 3-amino-2-oxopropyl phosphate-binding positions include glycine 192 and 213-214 (GH).

The protein belongs to the PNP synthase family. As to quaternary structure, homooctamer; tetramer of dimers.

The protein resides in the cytoplasm. It catalyses the reaction 3-amino-2-oxopropyl phosphate + 1-deoxy-D-xylulose 5-phosphate = pyridoxine 5'-phosphate + phosphate + 2 H2O + H(+). The protein operates within cofactor biosynthesis; pyridoxine 5'-phosphate biosynthesis; pyridoxine 5'-phosphate from D-erythrose 4-phosphate: step 5/5. Functionally, catalyzes the complicated ring closure reaction between the two acyclic compounds 1-deoxy-D-xylulose-5-phosphate (DXP) and 3-amino-2-oxopropyl phosphate (1-amino-acetone-3-phosphate or AAP) to form pyridoxine 5'-phosphate (PNP) and inorganic phosphate. The sequence is that of Pyridoxine 5'-phosphate synthase from Pelobacter propionicus (strain DSM 2379 / NBRC 103807 / OttBd1).